The sequence spans 363 residues: Galactokinase (363 aa).

16 to 19 (EHTD) provides a ligand contact to substrate. ATP is bound by residues serine 50 and 103–109 (GSGLSSS). Residues serine 109 and glutamate 141 each contribute to the Mg(2+) site. Aspartate 153 functions as the Proton acceptor in the catalytic mechanism. Residue tyrosine 205 coordinates substrate.

This sequence belongs to the GHMP kinase family. GalK subfamily.

The protein localises to the cytoplasm. It carries out the reaction alpha-D-galactose + ATP = alpha-D-galactose 1-phosphate + ADP + H(+). It functions in the pathway carbohydrate metabolism; galactose metabolism. Functionally, catalyzes the transfer of the gamma-phosphate of ATP to D-galactose to form alpha-D-galactose-1-phosphate (Gal-1-P). The protein is Galactokinase of Mycobacterium tuberculosis (strain ATCC 25177 / H37Ra).